A 314-amino-acid chain; its full sequence is tRNA dimethylallyltransferase (314 aa).

13 to 20 (GPTASGKS) contacts ATP. Substrate is bound at residue 15 to 20 (TASGKS). Interaction with substrate tRNA regions lie at residues 38–41 (DSMQ) and 161–165 (QRIAR).

Belongs to the IPP transferase family. As to quaternary structure, monomer. Mg(2+) is required as a cofactor.

The catalysed reaction is adenosine(37) in tRNA + dimethylallyl diphosphate = N(6)-dimethylallyladenosine(37) in tRNA + diphosphate. Functionally, catalyzes the transfer of a dimethylallyl group onto the adenine at position 37 in tRNAs that read codons beginning with uridine, leading to the formation of N6-(dimethylallyl)adenosine (i(6)A). This is tRNA dimethylallyltransferase from Parvibaculum lavamentivorans (strain DS-1 / DSM 13023 / NCIMB 13966).